Reading from the N-terminus, the 54-residue chain is Putative collagen-like domain-containing protein 065L (54 aa).

The disordered stretch occupies residues 1 to 54 (MRGLEAPGAVGPTGPSGAPGSQGPDGDVGGMGPEGPKGDDGPVGPKGPQGAAIF). The Collagen-like domain occupies 7 to 51 (PGAVGPTGPSGAPGSQGPDGDVGGMGPEGPKGDDGPVGPKGPQGA). Gly residues predominate over residues 26–35 (GDVGGMGPEG). A compositionally biased stretch (low complexity) spans 42–54 (PVGPKGPQGAAIF).

In Dryophytes versicolor (chameleon treefrog), this protein is Putative collagen-like domain-containing protein 065L.